The sequence spans 291 residues: Small ribosomal subunit biogenesis GTPase RsgA (291 aa).

In terms of domain architecture, CP-type G spans 63-221; it reads KNEIKRPPVS…IADTPGFSAL (159 aa). Residues 112–115 and 164–172 contribute to the GTP site; these read TKKD and GQSGVGKST. Cys245, Cys250, His252, and Cys258 together coordinate Zn(2+).

The protein belongs to the TRAFAC class YlqF/YawG GTPase family. RsgA subfamily. Monomer. Associates with 30S ribosomal subunit, binds 16S rRNA. Zn(2+) is required as a cofactor.

The protein resides in the cytoplasm. Its function is as follows. One of several proteins that assist in the late maturation steps of the functional core of the 30S ribosomal subunit. Helps release RbfA from mature subunits. May play a role in the assembly of ribosomal proteins into the subunit. Circularly permuted GTPase that catalyzes slow GTP hydrolysis, GTPase activity is stimulated by the 30S ribosomal subunit. The protein is Small ribosomal subunit biogenesis GTPase RsgA of Staphylococcus saprophyticus subsp. saprophyticus (strain ATCC 15305 / DSM 20229 / NCIMB 8711 / NCTC 7292 / S-41).